A 267-amino-acid chain; its full sequence is MSDNFVSFGEQGAQLTYGSYLRLPQLLEAQHLESDPPAHDELLFITIHQVYELWFKQLLHEVSAARDAMLGGEAGGRLWWAQHLLTRVHVIERVLVQQIDVLETMTPQEFLEFRQRLAPASGFQSVQFRELEFLSGAKDPAYLERFRGITPAEKARLDARLSEPTLWDAFLAMLRSFGFAADSDAEVSAALRTAAHDRTRYAVVWALSEGLLQHDELAANWRARHVVMVERMIGSKSGTGGSSGSSYLRSRLPVQYYPLLWGLRSEL.

Residues 44-48 (FITIH) and arginine 114 each bind substrate. A heme-binding site is contributed by histidine 225. A substrate-binding site is contributed by threonine 239.

The protein belongs to the tryptophan 2,3-dioxygenase family. In terms of assembly, homotetramer. Requires heme as cofactor.

It carries out the reaction L-tryptophan + O2 = N-formyl-L-kynurenine. The protein operates within amino-acid degradation; L-tryptophan degradation via kynurenine pathway; L-kynurenine from L-tryptophan: step 1/2. In terms of biological role, heme-dependent dioxygenase that catalyzes the oxidative cleavage of the L-tryptophan (L-Trp) pyrrole ring and converts L-tryptophan to N-formyl-L-kynurenine. Catalyzes the oxidative cleavage of the indole moiety. This Nocardioides sp. (strain ATCC BAA-499 / JS614) protein is Tryptophan 2,3-dioxygenase.